Reading from the N-terminus, the 463-residue chain is Putative sodium-coupled neutral amino acid transporter 11 (463 aa).

The tract at residues 1 to 27 (MGYPGQRPVIPPQSHRDDRETLVSEHK) is disordered. Positions 14 to 25 (SHRDDRETLVSE) are enriched in basic and acidic residues. The next 11 helical transmembrane spans lie at 38-58 (AVFN…PYSM), 65-85 (LGIL…ILLI), 105-125 (GFPG…IAMI), 150-170 (LLIG…LPLS), 178-198 (LGKI…IVVA), 225-245 (VGVM…YGSL), 256-276 (IIHV…TCGY), 298-320 (VTFG…CFVT), 336-356 (VCHI…SLLI), 358-378 (CLGI…IFII), and 397-417 (IMSC…FVMA). Asn-437, Asn-442, and Asn-458 each carry an N-linked (GlcNAc...) asparagine glycan.

It belongs to the amino acid/polyamine transporter 2 family.

It localises to the membrane. Functionally, putative sodium-dependent amino acid/proton antiporter. The sequence is that of Putative sodium-coupled neutral amino acid transporter 11 (SLC38A11) from Bos taurus (Bovine).